We begin with the raw amino-acid sequence, 159 residues long: Ribosomal RNA large subunit methyltransferase H (159 aa).

S-adenosyl-L-methionine-binding positions include Leu76, Gly107, and 126-131 (LSKLTM).

The protein belongs to the RNA methyltransferase RlmH family. As to quaternary structure, homodimer.

It is found in the cytoplasm. The catalysed reaction is pseudouridine(1915) in 23S rRNA + S-adenosyl-L-methionine = N(3)-methylpseudouridine(1915) in 23S rRNA + S-adenosyl-L-homocysteine + H(+). Specifically methylates the pseudouridine at position 1915 (m3Psi1915) in 23S rRNA. This is Ribosomal RNA large subunit methyltransferase H from Acinetobacter baumannii (strain AB307-0294).